A 473-amino-acid polypeptide reads, in one-letter code: Ribulose bisphosphate carboxylase large chain (473 aa).

Substrate-binding residues include Asn116 and Thr166. The active-site Proton acceptor is the Lys168. Lys170 provides a ligand contact to substrate. Positions 194, 196, and 197 each coordinate Mg(2+). Lys194 is subject to N6-carboxylysine. His287 (proton acceptor) is an active-site residue. Substrate is bound by residues Arg288, His320, and Ser372.

It belongs to the RuBisCO large chain family. Type I subfamily. In terms of assembly, heterohexadecamer of 8 large chains and 8 small chains. It depends on Mg(2+) as a cofactor.

The enzyme catalyses 2 (2R)-3-phosphoglycerate + 2 H(+) = D-ribulose 1,5-bisphosphate + CO2 + H2O. The catalysed reaction is D-ribulose 1,5-bisphosphate + O2 = 2-phosphoglycolate + (2R)-3-phosphoglycerate + 2 H(+). Functionally, ruBisCO catalyzes two reactions: the carboxylation of D-ribulose 1,5-bisphosphate, the primary event in carbon dioxide fixation, as well as the oxidative fragmentation of the pentose substrate. Both reactions occur simultaneously and in competition at the same active site. This chain is Ribulose bisphosphate carboxylase large chain, found in Rhodobacter capsulatus (strain ATCC BAA-309 / NBRC 16581 / SB1003).